The sequence spans 446 residues: UDP-N-acetylmuramoylalanine--D-glutamate ligase (446 aa).

115 to 121 (GTNGKTT) lines the ATP pocket.

It belongs to the MurCDEF family.

Its subcellular location is the cytoplasm. The enzyme catalyses UDP-N-acetyl-alpha-D-muramoyl-L-alanine + D-glutamate + ATP = UDP-N-acetyl-alpha-D-muramoyl-L-alanyl-D-glutamate + ADP + phosphate + H(+). It participates in cell wall biogenesis; peptidoglycan biosynthesis. Cell wall formation. Catalyzes the addition of glutamate to the nucleotide precursor UDP-N-acetylmuramoyl-L-alanine (UMA). The sequence is that of UDP-N-acetylmuramoylalanine--D-glutamate ligase from Pelobacter propionicus (strain DSM 2379 / NBRC 103807 / OttBd1).